The following is a 97-amino-acid chain: Large ribosomal subunit protein uL23 (97 aa).

The protein belongs to the universal ribosomal protein uL23 family. Part of the 50S ribosomal subunit. Contacts protein L29, and trigger factor when it is bound to the ribosome.

One of the early assembly proteins it binds 23S rRNA. One of the proteins that surrounds the polypeptide exit tunnel on the outside of the ribosome. Forms the main docking site for trigger factor binding to the ribosome. The sequence is that of Large ribosomal subunit protein uL23 from Lactiplantibacillus plantarum (strain ATCC BAA-793 / NCIMB 8826 / WCFS1) (Lactobacillus plantarum).